The chain runs to 57 residues: Exactin (57 aa).

Disulfide bonds link cysteine 3–cysteine 19, cysteine 12–cysteine 37, cysteine 41–cysteine 49, and cysteine 50–cysteine 55.

It belongs to the three-finger toxin family. Short-chain subfamily. Orphan group XX sub-subfamily. As to expression, expressed by the venom gland.

The protein localises to the secreted. In terms of biological role, anticoagulant protein that prevents the activation of factor X (F10). It acts by potently inhibiting the extrinsic tenase complex (ETC) (IC(50)=116.49 nM), a complex composed by active factor VII (F7a), tissue factor (TF) and F10. In addition, it shows weaker activities on other complexes. It weakly inhibits F10 activation by inhibiting the intrinsic tenase complex (IC(50)=4.05 uM), a complex composed by active factor IX (IXa, F9a), its cofactor factor VIII (VIIIa, F8a), and their substrate F10. It also weakly prevents prothrombin activation by inhibiting the prothrombinase complex (IC(50)=17.66 uM). It shows high kinetic constant towards F7a/TF/F10/phospholipids complex (Ki=30.62 nM) and lower kinetic constant towards F7a/TF/phospholipids complex (Ki=153.75 nM). The sequence is that of Exactin from Hemachatus haemachatus (Rinkhals).